A 111-amino-acid chain; its full sequence is Ig kappa chain V-III region PC 6684 (111 aa).

The segment at 1–23 is framework-1; the sequence is DIVLTQSPASLAVSLGQRATISC. Cysteines 23 and 92 form a disulfide. A complementarity-determining-1 region spans residues 24–38; it reads RASKSVSTSGYSYMH. Residues 39–53 are framework-2; it reads WYQQKPGQPPKLLIY. The interval 54-60 is complementarity-determining-2; that stretch reads LASNLES. The tract at residues 61 to 92 is framework-3; the sequence is GVPARFSGSGSGTDFTLNIHPVEEEDAATYYC. The interval 93 to 101 is complementarity-determining-3; it reads QHSRELPRT. Residues 102–111 are framework-4; sequence FGGGTKLEIK.

The sequence is that of Ig kappa chain V-III region PC 6684 from Mus musculus (Mouse).